A 443-amino-acid polypeptide reads, in one-letter code: Methyl-coenzyme M reductase II subunit beta (443 aa).

Coenzyme M is bound at residue Tyr367. Residue Gly369 coordinates coenzyme B.

The protein belongs to the methyl-coenzyme M reductase beta subunit family. In terms of assembly, MCR is a hexamer of two alpha, two beta, and two gamma chains, forming a dimer of heterotrimers. It depends on coenzyme F430 as a cofactor.

It catalyses the reaction coenzyme B + methyl-coenzyme M = methane + coenzyme M-coenzyme B heterodisulfide. It participates in one-carbon metabolism; methyl-coenzyme M reduction; methane from methyl-coenzyme M: step 1/1. Functionally, component of the methyl-coenzyme M reductase (MCR) I that catalyzes the reductive cleavage of methyl-coenzyme M (CoM-S-CH3 or 2-(methylthio)ethanesulfonate) using coenzyme B (CoB or 7-mercaptoheptanoylthreonine phosphate) as reductant which results in the production of methane and the mixed heterodisulfide of CoB and CoM (CoM-S-S-CoB). This is the final step in methanogenesis. The chain is Methyl-coenzyme M reductase II subunit beta (mrtB) from Methanothermus fervidus (strain ATCC 43054 / DSM 2088 / JCM 10308 / V24 S).